The primary structure comprises 562 residues: Formate--tetrahydrofolate ligase (562 aa).

ATP is bound at residue 71-78; sequence TPAGEGKS.

This sequence belongs to the formate--tetrahydrofolate ligase family.

It carries out the reaction (6S)-5,6,7,8-tetrahydrofolate + formate + ATP = (6R)-10-formyltetrahydrofolate + ADP + phosphate. It functions in the pathway one-carbon metabolism; tetrahydrofolate interconversion. The sequence is that of Formate--tetrahydrofolate ligase from Bacillus cereus (strain Q1).